Here is a 275-residue protein sequence, read N- to C-terminus: Formamidopyrimidine-DNA glycosylase (275 aa).

P2 (schiff-base intermediate with DNA) is an active-site residue. E3 serves as the catalytic Proton donor. The Proton donor; for beta-elimination activity role is filled by K58. DNA is bound by residues H91, R109, and R154. The FPG-type zinc finger occupies 240 to 274 (AVYERAGLPCRVCGAPIRRLVQGQRATYFCPSCQK). Catalysis depends on R264, which acts as the Proton donor; for delta-elimination activity.

Belongs to the FPG family. In terms of assembly, monomer. Zn(2+) serves as cofactor.

The enzyme catalyses Hydrolysis of DNA containing ring-opened 7-methylguanine residues, releasing 2,6-diamino-4-hydroxy-5-(N-methyl)formamidopyrimidine.. It carries out the reaction 2'-deoxyribonucleotide-(2'-deoxyribose 5'-phosphate)-2'-deoxyribonucleotide-DNA = a 3'-end 2'-deoxyribonucleotide-(2,3-dehydro-2,3-deoxyribose 5'-phosphate)-DNA + a 5'-end 5'-phospho-2'-deoxyribonucleoside-DNA + H(+). Functionally, involved in base excision repair of DNA damaged by oxidation or by mutagenic agents. Acts as a DNA glycosylase that recognizes and removes damaged bases. Has a preference for oxidized purines, such as 7,8-dihydro-8-oxoguanine (8-oxoG). Has AP (apurinic/apyrimidinic) lyase activity and introduces nicks in the DNA strand. Cleaves the DNA backbone by beta-delta elimination to generate a single-strand break at the site of the removed base with both 3'- and 5'-phosphates. The sequence is that of Formamidopyrimidine-DNA glycosylase from Bordetella parapertussis (strain 12822 / ATCC BAA-587 / NCTC 13253).